Consider the following 405-residue polypeptide: MKLPIYLDYAATTPVDERVAKEMMQCLTMDGNFGNPASRSHRFGWQAEEVVDQARTDVADLINADPREIVFTSGATESNNLAIKGAAQFYKKKGKHIITAKTEHKAVIDTCRELERQGFEVTYMDVEENGLLDLQKLADTMRDDTVLVSIMHVNNELGVIQDIATIGEMCRERKIMFHVDAAQSAGKVLIDVQQLKVDFMSFSGHKVYGPKGVGALYVRRKPRARLEAQMHGGGHERGMRSGTLATHQLVGMGTAFRVAKQDFEKDHAHISALRKRLIDGIMSDMEEVYFNGTQDQSVPGIVNISFNFVEGESLLMAVKDIAVSSGSACTSASLEPSYVLRALGRNDELAHSSIRFSIGRFTTEEEIDYTVELMKNSIGRLREMSPLWEMHQEGIDLDSVEWAHH.

Pyridoxal 5'-phosphate is bound by residues 75–76 (AT), N155, Q183, and 203–205 (SGH). An N6-(pyridoxal phosphate)lysine modification is found at K206. T243 provides a ligand contact to pyridoxal 5'-phosphate. The active-site Cysteine persulfide intermediate is the C329. C329 provides a ligand contact to [2Fe-2S] cluster.

It belongs to the class-V pyridoxal-phosphate-dependent aminotransferase family. NifS/IscS subfamily. Homodimer. Forms a heterotetramer with IscU, interacts with other sulfur acceptors. It depends on pyridoxal 5'-phosphate as a cofactor.

Its subcellular location is the cytoplasm. It catalyses the reaction (sulfur carrier)-H + L-cysteine = (sulfur carrier)-SH + L-alanine. It participates in cofactor biosynthesis; iron-sulfur cluster biosynthesis. Functionally, master enzyme that delivers sulfur to a number of partners involved in Fe-S cluster assembly, tRNA modification or cofactor biosynthesis. Catalyzes the removal of elemental sulfur atoms from cysteine to produce alanine. Functions as a sulfur delivery protein for Fe-S cluster synthesis onto IscU, an Fe-S scaffold assembly protein, as well as other S acceptor proteins. This is Cysteine desulfurase IscS from Pseudoalteromonas translucida (strain TAC 125).